The primary structure comprises 256 residues: Alcohol dehydrogenase (256 aa).

Serine 2 is subject to N-acetylserine. NAD(+) contacts are provided by residues 12 to 41 (FVAG…LDRI) and aspartate 65. Residue serine 140 participates in substrate binding. Tyrosine 153 serves as the catalytic Proton acceptor. Lysine 157 is a binding site for NAD(+).

It belongs to the short-chain dehydrogenases/reductases (SDR) family. Homodimer.

It carries out the reaction a primary alcohol + NAD(+) = an aldehyde + NADH + H(+). The enzyme catalyses a secondary alcohol + NAD(+) = a ketone + NADH + H(+). Inhibited by 2,2,2-trifluoroethanol and pyrazole. This chain is Alcohol dehydrogenase (Adh), found in Drosophila melanogaster (Fruit fly).